The primary structure comprises 363 residues: Phosphoserine aminotransferase (363 aa).

Residue arginine 42 coordinates L-glutamate. Pyridoxal 5'-phosphate contacts are provided by residues 76–77 (AS), tryptophan 101, threonine 151, aspartate 170, and glutamine 193. Lysine 194 carries the N6-(pyridoxal phosphate)lysine modification. Residue 234–235 (NT) coordinates pyridoxal 5'-phosphate.

The protein belongs to the class-V pyridoxal-phosphate-dependent aminotransferase family. SerC subfamily. Homodimer. Requires pyridoxal 5'-phosphate as cofactor.

Its subcellular location is the cytoplasm. It catalyses the reaction O-phospho-L-serine + 2-oxoglutarate = 3-phosphooxypyruvate + L-glutamate. The catalysed reaction is 4-(phosphooxy)-L-threonine + 2-oxoglutarate = (R)-3-hydroxy-2-oxo-4-phosphooxybutanoate + L-glutamate. The protein operates within amino-acid biosynthesis; L-serine biosynthesis; L-serine from 3-phospho-D-glycerate: step 2/3. In terms of biological role, catalyzes the reversible conversion of 3-phosphohydroxypyruvate to phosphoserine and of 3-hydroxy-2-oxo-4-phosphonooxybutanoate to phosphohydroxythreonine. The sequence is that of Phosphoserine aminotransferase from Listeria monocytogenes serotype 4b (strain F2365).